The following is a 375-amino-acid chain: MAINIEYVILRHLQMELKAPFTTSFGTFQRKELILVEVVDRDGVSGWGESVAFSAPWYSEETVKTNWHMLEDFLVPLALAEPIHHPEELSKRFSAIRQNNMAKAALEGAVWDLYAKRLGVPLSQALGGAKKDIEVGVSIGIQPTVADLLQVIERYVAQGYRRIKVKIKPSWDVDVIREVRRVFPDVPLMADANSAYTLVDADRLKALDEFGLLMIEQPLAADDLVDHARLQPLLQTPICLDESIRSYDDARKALDLGSCRIINIKIGRVGGLGEAKRIHDLCAERGAPVWCGGMLEAGVGRAHNIAITTLENFTLPGDTAASSHYWERDIITPEVEVHGGLIRVPDAPGIGYDVDRRQVERYTQFAKVFHRTATA.

The Proton donor role is filled by Lys-166. Positions 191, 216, and 241 each coordinate Mg(2+). The active-site Proton acceptor is Lys-265.

This sequence belongs to the mandelate racemase/muconate lactonizing enzyme family. MenC type 2 subfamily. Homotetramer. Requires a divalent metal cation as cofactor.

It carries out the reaction (1R,6R)-6-hydroxy-2-succinyl-cyclohexa-2,4-diene-1-carboxylate = 2-succinylbenzoate + H2O. It catalyses the reaction N-acetyl-D-methionine = N-acetyl-L-methionine. The protein operates within quinol/quinone metabolism; 1,4-dihydroxy-2-naphthoate biosynthesis; 1,4-dihydroxy-2-naphthoate from chorismate: step 4/7. Its pathway is quinol/quinone metabolism; menaquinone biosynthesis. Converts 2-succinyl-6-hydroxy-2,4-cyclohexadiene-1-carboxylate (SHCHC) to 2-succinylbenzoate (OSB). Also acts as a N-succinylamino acid racemase (NSAR) that catalyzes the racemization of N-succinyl-D/L-phenylalanine. Can catalyze the racemization of a broad range of N-acylamino acids, including N-acetyl-D-methionine, N-formyl-D/L-methionine, N-formyl-D/L-norleucine, N-formyl-D/L-aminobutyric acid, N-formyl-D/L-norvaline, N-formyl-D/L-homophenylalanine, N-carbamoyl-D-methionine and N-carbamoyl-D-norleucine. May be a bifunctional enzyme involved in menaquinone biosynthesis and in an irreversible pathway for the conversion of D- to L-amino acids, thereby facilitating the survival and/or growth of the organism. In Geobacillus stearothermophilus (Bacillus stearothermophilus), this protein is o-succinylbenzoate synthase.